Reading from the N-terminus, the 262-residue chain is T-cell surface glycoprotein YE1/48 (262 aa).

At 1–44 (MSEQEVTYSMVRFHKSAGLQKQVRPEETKGPREAGYRRCSFHWK) the chain is on the cytoplasmic side. A helical; Signal-anchor for type II membrane protein transmembrane segment spans residues 45-66 (FIVIALGIFCFLLLVAVSVLAI). At 67–262 (KIFQYDQQKN…CGKRLDKFPH (196 aa)) the chain is on the extracellular side. Residues asparagine 86, asparagine 103, and asparagine 123 are each glycosylated (N-linked (GlcNAc...) asparagine). A Cell attachment site motif is present at residues 137–139 (RGD). The region spanning 138–257 (GDKVYWFCYG…VFICICGKRL (120 aa)) is the C-type lectin domain. Cystine bridges form between cysteine 145–cysteine 150, cysteine 163–cysteine 251, cysteine 167–cysteine 253, and cysteine 232–cysteine 245.

Homodimer; disulfide-linked. High, in T-lymphoma lines, very low in normal lymphocytes.

It is found in the membrane. Functionally, receptor on natural killer (NK) cells for H-2d alleles. Inhibits the activity of NK cells thus preventing cell lysis. This chain is T-cell surface glycoprotein YE1/48 (Klra1), found in Mus musculus (Mouse).